The following is a 624-amino-acid chain: Glycosyltransferase AglD (624 aa).

D201 is an active-site residue. 8 consecutive transmembrane segments (helical) span residues 260 to 280 (VTIV…TLYI), 285 to 305 (VISV…VIYV), 381 to 401 (LLTI…TGGL), 427 to 447 (AAYV…GIAL), 496 to 518 (VGLT…LLAL), 532 to 552 (FFAV…GGVG), 556 to 576 (IAFT…ALAA), and 587 to 607 (VTIV…TTAV).

This sequence belongs to the glycosyltransferase 2 family.

It localises to the cell membrane. The protein operates within cell surface structure biogenesis; S-layer biogenesis. Its function is as follows. Involved in the assembly of a N-linked pentasaccharide that decorates the S-layer glycoprotein and flagellins. Catalyzes the addition of the mannose found at position 5 of the pentasaccharide to its own distinct dolichol phosphate carrier. The sequence is that of Glycosyltransferase AglD (aglD) from Haloferax volcanii (strain ATCC 29605 / DSM 3757 / JCM 8879 / NBRC 14742 / NCIMB 2012 / VKM B-1768 / DS2) (Halobacterium volcanii).